The primary structure comprises 212 residues: MPPRPRFDRRAPVRELPNINDRINYPQLRVVDADGEQLGVIDREQALEVARERELDLVLVSEKADPPVCRIMDYGKFKFEQEKKAKEAKKKSHQTEVKEVKMRYKIDQHDYDVRIGQAQRFLKAGDKVKCTVIFRGREIQHTALAEVLLRRMAKDLEEPAEVQQPPKREGRNMIMFLTPRKAPLVKKDKDEEVVNKAVRTIPSPARRINTQD.

Belongs to the IF-3 family. As to quaternary structure, monomer.

Its subcellular location is the cytoplasm. IF-3 binds to the 30S ribosomal subunit and shifts the equilibrium between 70S ribosomes and their 50S and 30S subunits in favor of the free subunits, thus enhancing the availability of 30S subunits on which protein synthesis initiation begins. This chain is Translation initiation factor IF-3, found in Synechococcus sp. (strain CC9311).